Reading from the N-terminus, the 1474-residue chain is Alpha-2-macroglobulin (1474 aa).

Positions 1–23 (MGKNKLLHPSLVLLLLVLLPTDA) are cleaved as a signal peptide. Cys48 and Cys86 are oxidised to a cystine. Asn55 is a glycosylation site (N-linked (GlcNAc...) (complex) asparagine). N-linked (GlcNAc...) asparagine glycans are attached at residues Asn70 and Asn247. Cystine bridges form between Cys251-Cys299 and Cys269-Cys287. N-linked (GlcNAc...) asparagine glycosylation is found at Asn396 and Asn410. Disulfide bonds link Cys470–Cys563, Cys595–Cys771, Cys642–Cys689, Cys821–Cys849, Cys847–Cys883, Cys921–Cys1321, Cys1079–Cys1127, and Cys1352–Cys1467. Positions 690 to 728 (PQLQQYEMHGPEGLRVGFYESDVMGRGHARLVHVEEPHT) are bait region. Isoglutamyl lysine isopeptide (Gln-Lys) (interchain with K-? in other proteins) cross-links involve residues Gln693 and Gln694. Inhibitory regions lie at residues 704 to 709 (RVGFYE), 719 to 723 (RLVHV), and 730 to 735 (TVRKYF). Asn869 carries an N-linked (GlcNAc...) asparagine glycan. Positions 972–975 (CGEQ) form a cross-link, isoglutamyl cysteine thioester (Cys-Gln). Asn991 is a glycosylation site (N-linked (GlcNAc...) asparagine). The N-linked (GlcNAc...) (complex) asparagine glycan is linked to Asn1424.

Belongs to the protease inhibitor I39 (alpha-2-macroglobulin) family. In terms of assembly, homotetramer; disulfide-linked. In terms of tissue distribution, secreted in plasma.

The protein resides in the secreted. Functionally, is able to inhibit all four classes of proteinases by a unique 'trapping' mechanism. This protein has a peptide stretch, called the 'bait region' which contains specific cleavage sites for different proteinases. When a proteinase cleaves the bait region, a conformational change is induced in the protein which traps the proteinase. The entrapped enzyme remains active against low molecular weight substrates (activity against high molecular weight substrates is greatly reduced). Following cleavage in the bait region, a thioester bond is hydrolyzed and mediates the covalent binding of the protein to the proteinase. The protein is Alpha-2-macroglobulin (A2M) of Homo sapiens (Human).